Consider the following 499-residue polypeptide: Na(+)/H(+) antiporter NhaB (499 aa).

The next 12 membrane-spanning stretches (helical) occupy residues 38 to 58 (VSPFLAGWALIIEFIFTLAMA), 62 to 82 (YPLQPGGLLAIQAVLLGLTSA), 89 to 109 (VLANFKVILLLMFMVAGIYFM), 128 to 148 (LLLSLLFSFVAAVLSAFLDAL), 149 to 169 (TVTAVLIAVAVGFYAVYHRFA), 204 to 224 (LIMHGAVGTALGGVATLVGEP), 242 to 262 (LVMAPISVPALIGGLLTCAIL), 310 to 330 (VLVFALALHLAEVGLIGLLII), 349 to 369 (FEEALPFTALLVVFFAVVAVI), 393 to 413 (MFFVANGVLSMISDNVFVATV), 449 to 469 (ATPNGQAAFLFLLTSALAPLI), and 478 to 498 (IMALPYTIVLGAVGLGSVILF).

It belongs to the NhaB Na(+)/H(+) (TC 2.A.34) antiporter family.

The protein localises to the cell inner membrane. It carries out the reaction 2 Na(+)(in) + 3 H(+)(out) = 2 Na(+)(out) + 3 H(+)(in). In terms of biological role, na(+)/H(+) antiporter that extrudes sodium in exchange for external protons. This chain is Na(+)/H(+) antiporter NhaB, found in Saccharophagus degradans (strain 2-40 / ATCC 43961 / DSM 17024).